Reading from the N-terminus, the 142-residue chain is uncharacterized protein (142 aa).

The protein resides in the mitochondrion. This is an uncharacterized protein from Mus musculus (Mouse).